A 91-amino-acid chain; its full sequence is DNA/RNA-binding protein Alba (91 aa).

Position 11 is an N6-acetyllysine (Lys-11).

Belongs to the histone-like Alba family. Post-translationally, acetylated. Acetylation at Lys-11 decreases DNA-binding affinity.

The protein resides in the cytoplasm. Its subcellular location is the chromosome. Its function is as follows. Binds double-stranded DNA tightly but without sequence specificity. Incubation with DNA in vitro gives fibrous structures 10.3 +/- 1.1 nm in thickness (naked DNA is 1.83 +/- 0.37 nm). This protein does not significantly compact DNA. The protein is DNA/RNA-binding protein Alba of Thermococcus kodakarensis (strain ATCC BAA-918 / JCM 12380 / KOD1) (Pyrococcus kodakaraensis (strain KOD1)).